A 505-amino-acid polypeptide reads, in one-letter code: Cobyric acid synthase (505 aa).

Positions Asp-251 to Phe-444 constitute a GATase cobBQ-type domain. The active-site Nucleophile is the Cys-332. His-436 is an active-site residue.

The protein belongs to the CobB/CobQ family. CobQ subfamily.

The protein operates within cofactor biosynthesis; adenosylcobalamin biosynthesis. Its function is as follows. Catalyzes amidations at positions B, D, E, and G on adenosylcobyrinic A,C-diamide. NH(2) groups are provided by glutamine, and one molecule of ATP is hydrogenolyzed for each amidation. The protein is Cobyric acid synthase of Clostridium novyi (strain NT).